The primary structure comprises 211 residues: Thymidylate kinase (211 aa).

10–17 (GPDGAGKT) serves as a coordination point for ATP.

Belongs to the thymidylate kinase family.

It carries out the reaction dTMP + ATP = dTDP + ADP. Its function is as follows. Phosphorylation of dTMP to form dTDP in both de novo and salvage pathways of dTTP synthesis. The chain is Thymidylate kinase from Lactococcus lactis subsp. cremoris (strain MG1363).